A 547-amino-acid polypeptide reads, in one-letter code: Chaperonin GroEL (547 aa).

ATP-binding positions include 30-33, lysine 51, 87-91, glycine 415, 479-481, and aspartate 495; these read TLGP, DGTTT, and NAA.

This sequence belongs to the chaperonin (HSP60) family. Forms a cylinder of 14 subunits composed of two heptameric rings stacked back-to-back. Interacts with the co-chaperonin GroES.

It is found in the cytoplasm. It carries out the reaction ATP + H2O + a folded polypeptide = ADP + phosphate + an unfolded polypeptide.. Together with its co-chaperonin GroES, plays an essential role in assisting protein folding. The GroEL-GroES system forms a nano-cage that allows encapsulation of the non-native substrate proteins and provides a physical environment optimized to promote and accelerate protein folding. In Pseudomonas syringae pv. tomato (strain ATCC BAA-871 / DC3000), this protein is Chaperonin GroEL.